Reading from the N-terminus, the 169-residue chain is Ubiquitin-conjugating enzyme E2 2 (169 aa).

One can recognise a UBC core domain in the interval 4 to 150; that stretch reads AAKRRLIRDF…VKKTVELSWV (147 aa). Catalysis depends on cysteine 88, which acts as the Glycyl thioester intermediate.

Belongs to the ubiquitin-conjugating enzyme family.

The protein localises to the cytoplasm. It localises to the nucleus. It catalyses the reaction S-ubiquitinyl-[E1 ubiquitin-activating enzyme]-L-cysteine + [E2 ubiquitin-conjugating enzyme]-L-cysteine = [E1 ubiquitin-activating enzyme]-L-cysteine + S-ubiquitinyl-[E2 ubiquitin-conjugating enzyme]-L-cysteine.. Its pathway is protein modification; protein ubiquitination. In terms of biological role, catalyzes the covalent attachment of ubiquitin to other proteins. Plays a role in transcription regulation by catalyzing the monoubiquitination of histone H2B to form H2BK123ub1. H2BK123ub1 gives a specific tag for epigenetic transcriptional activation and is also a prerequisite for H3K4me and H3K79me formation. Also involved in postreplication repair of UV-damaged DNA, in N-end rule-dependent protein degradation and in sporulation. The sequence is that of Ubiquitin-conjugating enzyme E2 2 (UBC2) from Cryptococcus neoformans var. neoformans serotype D (strain B-3501A) (Filobasidiella neoformans).